Consider the following 485-residue polypeptide: Transcription factor ETV6 (485 aa).

A compositionally biased stretch (polar residues) spans 1–10; the sequence is MSETPAQSSI. Residues 1–32 form a disordered region; it reads MSETPAQSSIKQERISYTPPESPVASHRSSTP. Lysine 11 is subject to N6-acetyllysine; alternate. Lysine 11 participates in a covalent cross-link: Glycyl lysine isopeptide (Lys-Gly) (interchain with G-Cter in SUMO2); alternate. Threonine 18 carries the post-translational modification Phosphothreonine. Serine 22 is subject to Phosphoserine. One can recognise a PNT domain in the interval 41–125; sequence ALRMEEDSIH…ELLQHILKQR (85 aa). The disordered stretch occupies residues 157–210; sequence NCVQRTPRTPAESVHHNPPTIELLHRPRSPITTNHRPSPDPEQQRPQRSPLDNM. Threonine 165 is subject to Phosphothreonine. Serine 215, serine 240, and serine 251 each carry phosphoserine. A Glycyl lysine isopeptide (Lys-Gly) (interchain with G-Cter in SUMO2) cross-link involves residue lysine 284. N6-acetyllysine; alternate is present on lysine 298. Lysine 298 participates in a covalent cross-link: Glycyl lysine isopeptide (Lys-Gly) (interchain with G-Cter in SUMO2); alternate. The residue at position 319 (serine 319) is a Phosphoserine. Positions 335–416 form a DNA-binding region, ETS; it reads RLLWDYVYQL…PGQRLLFRFM (82 aa). Glycyl lysine isopeptide (Lys-Gly) (interchain with G-Cter in SUMO2) cross-links involve residues lysine 399 and lysine 417. The segment at 440 to 485 is disordered; sequence EQTYQEDEPTIASPVGWPRGNLPTGTAGGVMEAGELGVAVKEETRE.

The protein belongs to the ETS family. As to quaternary structure, can form homodimers or heterodimers with TEL2 or FLI1. Interacts with L3MBTL1 and HDAC9.

The protein resides in the nucleus. Transcriptional repressor; binds to the DNA sequence 5'-CCGGAAGT-3'. Plays a role in hematopoiesis and malignant transformation. The chain is Transcription factor ETV6 (Etv6) from Mus musculus (Mouse).